The following is a 517-amino-acid chain: MIRTGKQYLESLNDGRNVWVGNEKIDNVATHPKTRDYAQRHADFYDLHHRPDLQDVMTFVDKDGERRTMQWFGHYDKEQLRRKRKYHETIMREMAGASFPRTPDVNNYVLQTYIDDPSPWETQTIGAEGKVKAKNIVDFVNFAKKHDLNCAPQFVDPQMDRSNPDAQQRSPGLRVIEKNDKGIVVSGVKAIGTGVAFADWIHIGVFFRPGIPGDQIIFAATPVNTPGVTIVCRESVVKEDPIEHPLASQGDELDGMTVFDNVFIPWSHVFHLGNPEHAKLYPQRVFDWLHYHALIRQSVRAELMAGLAILITEHIGTNKIPAVQTRVAKLIGFHQAMLAHIVASEELGFHTPGGAYKPNILIYDFGRALYLENFSQMIYELVDLSGRSALIFASEDQWNDEALNGWFERMNNGPVGQPHDRVKIGRVIRDLFLTDWGNRLFVFENFNGTPLQAIRMLTMQRAEFSAAGPYGTLARKVCGIELTEGHDSEYKATAGYAQALDSARHQEKLALSGTMTV.

This sequence belongs to the FADH(2)-utilizing monooxygenase family. In terms of assembly, homotetramer in solution.

The catalysed reaction is 2,4,6-trichlorophenol + FADH2 + O2 = 2-chloro-6-hydroxy-1,4-benzoquinone + FAD + 2 chloride + 3 H(+). It carries out the reaction 2,4,6-trichlorophenol + FADH2 + O2 = 2,6-dichlorobenzoquinone + FAD + chloride + H2O + H(+). The enzyme catalyses 2,6-dichlorobenzoquinone + H2O = 2-chloro-6-hydroxy-1,4-benzoquinone + chloride + 2 H(+). It functions in the pathway aromatic compound metabolism. The protein operates within xenobiotic degradation. Involved in the degradation of 2,4,6-trichlorophenol (2,4,6-TCP). Catalyzes the conversion of 2,4,6-TCP to 6-chlorohydroxyquinol (6-CHQ). The monooxygenase oxidizes 2,4,6-TCP to 2,6-dichloroquinone (2,6-DCBQ), which remains with the enzyme and is hydrolyzed to 2-chlorohydroxyquinone. 2-chlorohydroxyquinone is chemically reduced by ascorbate and NADH to 6-chlorohydroxyquinol (6-CHQ). This Cupriavidus pinatubonensis (strain JMP 134 / LMG 1197) (Cupriavidus necator (strain JMP 134)) protein is 2,4,6-trichlorophenol monooxygenase.